We begin with the raw amino-acid sequence, 479 residues long: (R)-1-hydroxy-2-aminoethylphosphonate ammonia-lyase (479 aa).

Residue Lys-317 is modified to N6-(pyridoxal phosphate)lysine.

It belongs to the class-III pyridoxal-phosphate-dependent aminotransferase family. Pyridoxal 5'-phosphate is required as a cofactor.

It carries out the reaction (1R)-(2-amino-1-hydroxyethyl)phosphonate = phosphonoacetaldehyde + NH4(+). Its function is as follows. Involved in phosphonate degradation. Functions as a lyase that catalyzes an elimination reaction on the naturally occurring compound (R)-1-hydroxy-2-aminoethylphosphonate ((R)-HAEP), releasing ammonia and generating phosphonoacetaldehyde (PAA), which can be then hydrolyzed by PhnX, encoded by an adjacent gene. Thus, catalyzes a reaction that serves to funnel (R)-HAEP into the hydrolytic pathway for aminoethylphosphonate (AEP, the most common biogenic phosphonate) degradation, expanding the scope and the usefulness of the pathway itself. Is not active toward the (S) enantiomer of HAEP or other HAEP-related compounds such as ethanolamine and D,L-isoserine, indicating a very high substrate specificity. The sequence is that of (R)-1-hydroxy-2-aminoethylphosphonate ammonia-lyase from Vibrio splendidus (strain 12B01).